A 77-amino-acid chain; its full sequence is Protein RADIALIS-like 4 (77 aa).

Positions 6–61 constitute an SANT domain; that stretch reads MSTSSWTAREDKQFEMALAKFDKDTPDRWQKIARAVGGKSTEEVKRHYELLLRDVN.

In terms of tissue distribution, expressed just outside the vascular bundles in the rosette stem and the leaf traces. Not detected in floral primordia.

Its subcellular location is the nucleus. Probable transcription factor. This is Protein RADIALIS-like 4 (RL4) from Arabidopsis thaliana (Mouse-ear cress).